A 258-amino-acid chain; its full sequence is Venom plasminogen activator TSV-PA (258 aa).

An N-terminal signal peptide occupies residues 1–18; sequence MELIRVLANLLILQLSYA. The propeptide occupies 19–24; it reads QKSSEL. The Peptidase S1 domain maps to 25–249; that stretch reads VFGGDECNIN…YLDWIKSIIA (225 aa). Intrachain disulfides connect Cys-31-Cys-163, Cys-50-Cys-66, Cys-98-Cys-256, Cys-142-Cys-210, Cys-174-Cys-189, and Cys-200-Cys-225. Active-site charge relay system residues include His-65 and Asp-110. N-linked (GlcNAc...) asparagine glycosylation is present at Asn-185. Ser-204 functions as the Charge relay system in the catalytic mechanism.

This sequence belongs to the peptidase S1 family. Snake venom subfamily. As to quaternary structure, monomer. In terms of tissue distribution, expressed by the venom gland.

Its subcellular location is the secreted. In terms of biological role, snake venom serine protease that activates plasminogen. This Trimeresurus stejnegeri (Chinese green tree viper) protein is Venom plasminogen activator TSV-PA.